Reading from the N-terminus, the 217-residue chain is 3-isopropylmalate dehydratase small subunit (217 aa).

This sequence belongs to the LeuD family. LeuD type 1 subfamily. Heterodimer of LeuC and LeuD.

It catalyses the reaction (2R,3S)-3-isopropylmalate = (2S)-2-isopropylmalate. It functions in the pathway amino-acid biosynthesis; L-leucine biosynthesis; L-leucine from 3-methyl-2-oxobutanoate: step 2/4. Functionally, catalyzes the isomerization between 2-isopropylmalate and 3-isopropylmalate, via the formation of 2-isopropylmaleate. The polypeptide is 3-isopropylmalate dehydratase small subunit (Delftia acidovorans (strain DSM 14801 / SPH-1)).